A 222-amino-acid chain; its full sequence is Peroxiredoxin (222 aa).

The Thioredoxin domain maps to 7 to 163 (PRLGEPAPAF…VIRLVDALQT (157 aa)). Cys-49 serves as the catalytic Cysteine sulfenic acid (-SOH) intermediate. Arg-126 provides a ligand contact to substrate. Cys-212 and Cys-218 are disulfide-bonded.

This sequence belongs to the peroxiredoxin family. Prx6 subfamily. As to quaternary structure, homodecamer. Pentamer of dimers that assemble into a ring structure.

The protein resides in the cytoplasm. The catalysed reaction is a hydroperoxide + [thioredoxin]-dithiol = an alcohol + [thioredoxin]-disulfide + H2O. Functionally, thiol-specific peroxidase that catalyzes the reduction of hydrogen peroxide and organic hydroperoxides to water and alcohols, respectively. Plays a role in cell protection against oxidative stress by detoxifying peroxides. In Aquifex aeolicus (strain VF5), this protein is Peroxiredoxin.